The sequence spans 329 residues: NADH-quinone oxidoreductase subunit H (329 aa).

Transmembrane regions (helical) follow at residues 9 to 29 (ILKVLVVVAIFSALAGFLTYV), 79 to 99 (IAPVISAATAFIAMSAVPFFP), 117 to 137 (VGILFVLGVGAVGMYGPLLAG), 162 to 182 (VSGLSILAPLMMVGSLSLIEI), 188 to 208 (GGIFDWLVWSQPLAFLLFLIA), 243 to 263 (FFIGEYANMITLAFLVVLLFF), 269 to 289 (LWFIPGGIAILLKVAVFLFLF), and 309 to 329 (WKVLMPLALLNIVLTGIVLIL).

It belongs to the complex I subunit 1 family. As to quaternary structure, NDH-1 is composed of 14 different subunits. Subunits NuoA, H, J, K, L, M, N constitute the membrane sector of the complex.

The protein resides in the cell inner membrane. The catalysed reaction is a quinone + NADH + 5 H(+)(in) = a quinol + NAD(+) + 4 H(+)(out). NDH-1 shuttles electrons from NADH, via FMN and iron-sulfur (Fe-S) centers, to quinones in the respiratory chain. The immediate electron acceptor for the enzyme in this species is believed to be ubiquinone. Couples the redox reaction to proton translocation (for every two electrons transferred, four hydrogen ions are translocated across the cytoplasmic membrane), and thus conserves the redox energy in a proton gradient. This subunit may bind ubiquinone. The chain is NADH-quinone oxidoreductase subunit H from Wolinella succinogenes (strain ATCC 29543 / DSM 1740 / CCUG 13145 / JCM 31913 / LMG 7466 / NCTC 11488 / FDC 602W) (Vibrio succinogenes).